Consider the following 379-residue polypeptide: Succinyl-diaminopimelate desuccinylase (379 aa).

H68 contacts Zn(2+). D70 is a catalytic residue. D101 is a Zn(2+) binding site. Catalysis depends on E134, which acts as the Proton acceptor. Residues E135, E163, and H352 each coordinate Zn(2+).

Belongs to the peptidase M20A family. DapE subfamily. Homodimer. Zn(2+) serves as cofactor. The cofactor is Co(2+).

The catalysed reaction is N-succinyl-(2S,6S)-2,6-diaminopimelate + H2O = (2S,6S)-2,6-diaminopimelate + succinate. It participates in amino-acid biosynthesis; L-lysine biosynthesis via DAP pathway; LL-2,6-diaminopimelate from (S)-tetrahydrodipicolinate (succinylase route): step 3/3. Its function is as follows. Catalyzes the hydrolysis of N-succinyl-L,L-diaminopimelic acid (SDAP), forming succinate and LL-2,6-diaminopimelate (DAP), an intermediate involved in the bacterial biosynthesis of lysine and meso-diaminopimelic acid, an essential component of bacterial cell walls. The chain is Succinyl-diaminopimelate desuccinylase from Dinoroseobacter shibae (strain DSM 16493 / NCIMB 14021 / DFL 12).